Here is a 115-residue protein sequence, read N- to C-terminus: Large ribosomal subunit protein bL19 (115 aa).

This sequence belongs to the bacterial ribosomal protein bL19 family.

Its function is as follows. This protein is located at the 30S-50S ribosomal subunit interface and may play a role in the structure and function of the aminoacyl-tRNA binding site. This Lactobacillus delbrueckii subsp. bulgaricus (strain ATCC BAA-365 / Lb-18) protein is Large ribosomal subunit protein bL19.